Reading from the N-terminus, the 1111-residue chain is Isoleucine--tRNA ligase (1111 aa).

Positions 52–62 (PFANGLPHYGH) match the 'HIGH' region motif. The 'KMSKS' region motif lies at 645–649 (KLSKR). Lysine 648 is an ATP binding site.

It belongs to the class-I aminoacyl-tRNA synthetase family. IleS type 2 subfamily. In terms of assembly, monomer. The cofactor is Zn(2+).

The protein localises to the cytoplasm. It carries out the reaction tRNA(Ile) + L-isoleucine + ATP = L-isoleucyl-tRNA(Ile) + AMP + diphosphate. Catalyzes the attachment of isoleucine to tRNA(Ile). As IleRS can inadvertently accommodate and process structurally similar amino acids such as valine, to avoid such errors it has two additional distinct tRNA(Ile)-dependent editing activities. One activity is designated as 'pretransfer' editing and involves the hydrolysis of activated Val-AMP. The other activity is designated 'posttransfer' editing and involves deacylation of mischarged Val-tRNA(Ile). This is Isoleucine--tRNA ligase from Wolbachia pipientis wMel.